A 352-amino-acid chain; its full sequence is Small ribosomal subunit biogenesis GTPase RsgA (352 aa).

A compositionally biased stretch (basic residues) spans 1–15 (MTKRKLTQNQKRRIH). The interval 1–26 (MTKRKLTQNQKRRIHSNNVKALDRHH) is disordered. The CP-type G domain maps to 106 to 274 (ENEIARPDYY…LIDSPGIREF (169 aa)). GTP is bound by residues 162–165 (NKVD) and 216–224 (GQSGVGKSS). Zn(2+) is bound by residues C298, C303, H305, and C311.

This sequence belongs to the TRAFAC class YlqF/YawG GTPase family. RsgA subfamily. As to quaternary structure, monomer. Associates with 30S ribosomal subunit, binds 16S rRNA. The cofactor is Zn(2+).

Its subcellular location is the cytoplasm. In terms of biological role, one of several proteins that assist in the late maturation steps of the functional core of the 30S ribosomal subunit. Helps release RbfA from mature subunits. May play a role in the assembly of ribosomal proteins into the subunit. Circularly permuted GTPase that catalyzes slow GTP hydrolysis, GTPase activity is stimulated by the 30S ribosomal subunit. This is Small ribosomal subunit biogenesis GTPase RsgA from Mannheimia succiniciproducens (strain KCTC 0769BP / MBEL55E).